The primary structure comprises 345 residues: Major capsid protein (345 aa).

Intercapsomeric interactions regions lie at residues 11 to 25 (GTNQ…GDKL) and 152 to 156 (YNENI).

This sequence belongs to the T7virus major capsid protein family. As to quaternary structure, homohexamer. Interacts with the connector protein and the minor capsid protein. Interacts with the capsid assembly scaffolding protein; capsid proteins and scaffolding proteins form building blocks that assemble to form the procapsid, each hexamer of the major capsid protein interacting with 2 scaffolding proteins.

Its subcellular location is the virion. Assembles with the minor capsid protein to form an icosahedral capsid with a T=7 symmetry, about 60 nm in diameter, and consisting of 415 capsid proteins. The major and minor capsid proteins are incorporated into the capsid in about a 90/10 ratio respectively. Once the capsid is formed, encapsidates one single copy of the viral genome. This chain is Major capsid protein, found in Escherichia coli (Bacteriophage T7).